The chain runs to 161 residues: Protein-export protein SecB (161 aa).

This sequence belongs to the SecB family. In terms of assembly, homotetramer, a dimer of dimers. One homotetramer interacts with 1 SecA dimer.

Its subcellular location is the cytoplasm. One of the proteins required for the normal export of preproteins out of the cell cytoplasm. It is a molecular chaperone that binds to a subset of precursor proteins, maintaining them in a translocation-competent state. It also specifically binds to its receptor SecA. This Shewanella sp. (strain MR-7) protein is Protein-export protein SecB.